A 602-amino-acid polypeptide reads, in one-letter code: Elongation factor 4 (602 aa).

The 182-residue stretch at 7–188 (ENIRNFSIIA…SIIRLVPPPK (182 aa)) folds into the tr-type G domain. Residues 19 to 24 (DHGKST) and 135 to 138 (NKID) each bind GTP.

The protein belongs to the TRAFAC class translation factor GTPase superfamily. Classic translation factor GTPase family. LepA subfamily.

The protein localises to the cell inner membrane. The enzyme catalyses GTP + H2O = GDP + phosphate + H(+). Required for accurate and efficient protein synthesis under certain stress conditions. May act as a fidelity factor of the translation reaction, by catalyzing a one-codon backward translocation of tRNAs on improperly translocated ribosomes. Back-translocation proceeds from a post-translocation (POST) complex to a pre-translocation (PRE) complex, thus giving elongation factor G a second chance to translocate the tRNAs correctly. Binds to ribosomes in a GTP-dependent manner. This chain is Elongation factor 4, found in Chlamydia trachomatis serovar A (strain ATCC VR-571B / DSM 19440 / HAR-13).